Consider the following 260-residue polypeptide: Kallikrein-8 (260 aa).

The signal sequence occupies residues 1–28; the sequence is MGRPPPCAIQTWILLFLLMGAWAGLTRA. Residues 29–32 constitute a propeptide that is removed on maturation; the sequence is QGSK. In terms of domain architecture, Peptidase S1 spans 33-257; sequence ILEGQECKPH…YTNWIKKTMG (225 aa). Disulfide bonds link C39-C173, C58-C74, C145-C246, C152-C218, C184-C198, and C208-C233. H73 serves as the catalytic Charge relay system. N110 is a glycosylation site (N-linked (GlcNAc...) asparagine). The active-site Charge relay system is the D120. S212 functions as the Charge relay system in the catalytic mechanism.

Belongs to the peptidase S1 family. Kallikrein subfamily. In terms of assembly, interacts with SPINK9. As to expression, restricted to hippocampus.

It is found in the secreted. It localises to the cytoplasm. It carries out the reaction Cleavage of amide substrates following the basic amino acids Arg or Lys at the P1 position, with a preference for Arg over Lys.. Its function is as follows. Serine protease which is capable of degrading a number of proteins such as casein, fibrinogen, kininogen, fibronectin and collagen type IV. Also cleaves L1CAM in response to increased neural activity. Induces neurite outgrowth and fasciculation of cultured hippocampal neurons. Plays a role in the formation and maturation of orphan and small synaptic boutons in the Schaffer-collateral pathway, regulates Schaffer-collateral long-term potentiation in the hippocampus and is required for memory acquisition and synaptic plasticity. Involved in skin desquamation and keratinocyte proliferation. Plays a role in the secondary phase of pathogenesis following spinal cord injury. The polypeptide is Kallikrein-8 (Klk8) (Rattus norvegicus (Rat)).